Here is a 524-residue protein sequence, read N- to C-terminus: Keratin, type II cytoskeletal 71 (524 aa).

Residues 1–130 (MNRQFTCKSG…DPEIQKVRAQ (130 aa)) form a head region. The tract at residues 131–166 (EREQIKALNNKFASFIDKVRFLEQQNQVLETKWELL) is coil 1A. One can recognise an IF rod domain in the interval 131–444 (EREQIKALNN…KLLESEECRM (314 aa)). Residues 167-185 (QQLDLNNCKNNLEPILEGY) form a linker 1 region. The interval 186–277 (ISNLRKQLET…CLYEAEIAQI (92 aa)) is coil 1B. The segment at 278-301 (QSHISDMSVILSMDNNRDLNLDSI) is linker 12. The tract at residues 302-440 (IDEVRAQYEE…ATYRKLLESE (139 aa)) is coil 2. Residues 441 to 524 (ECRMSGEFPS…QSASSKKASR (84 aa)) are tail. Residues 491 to 524 (VRGGEGRSRGSTSDYKDTLGKGSSQSASSKKASR) are disordered. The span at 494-509 (GEGRSRGSTSDYKDTL) shows a compositional bias: basic and acidic residues. Over residues 510-524 (GKGSSQSASSKKASR) the composition is skewed to low complexity.

Belongs to the intermediate filament family. As to quaternary structure, heterodimer of a type I and a type II keratin. Associates with KRT16 and/or KRT17.

The protein localises to the cytoplasm. It localises to the cytoskeleton. Functionally, plays a central role in hair formation. Essential component of keratin intermediate filaments in the inner root sheath (IRS) of the hair follicle. This chain is Keratin, type II cytoskeletal 71 (KRT71), found in Felis catus (Cat).